A 421-amino-acid polypeptide reads, in one-letter code: Serine--tRNA ligase (421 aa).

227 to 229 contacts L-serine; the sequence is TSE. Residues 257-259 and valine 273 contribute to the ATP site; that span reads RRE. Glutamate 280 serves as a coordination point for L-serine. 344–347 contributes to the ATP binding site; it reads ELTS. Threonine 379 provides a ligand contact to L-serine.

It belongs to the class-II aminoacyl-tRNA synthetase family. Type-1 seryl-tRNA synthetase subfamily. Homodimer. The tRNA molecule binds across the dimer.

It is found in the cytoplasm. It catalyses the reaction tRNA(Ser) + L-serine + ATP = L-seryl-tRNA(Ser) + AMP + diphosphate + H(+). The enzyme catalyses tRNA(Sec) + L-serine + ATP = L-seryl-tRNA(Sec) + AMP + diphosphate + H(+). It functions in the pathway aminoacyl-tRNA biosynthesis; selenocysteinyl-tRNA(Sec) biosynthesis; L-seryl-tRNA(Sec) from L-serine and tRNA(Sec): step 1/1. In terms of biological role, catalyzes the attachment of serine to tRNA(Ser). Is also able to aminoacylate tRNA(Sec) with serine, to form the misacylated tRNA L-seryl-tRNA(Sec), which will be further converted into selenocysteinyl-tRNA(Sec). In Leifsonia xyli subsp. xyli (strain CTCB07), this protein is Serine--tRNA ligase.